A 232-amino-acid chain; its full sequence is Thiamine import ATP-binding protein ThiQ (232 aa).

The ABC transporter domain occupies 2–230; that stretch reads LKLTDITWLY…KASASAILGI (229 aa). 32-39 contributes to the ATP binding site; it reads GPSGAGKS.

It belongs to the ABC transporter superfamily. Thiamine importer (TC 3.A.1.19.1) family. The complex is composed of two ATP-binding proteins (ThiQ), two transmembrane proteins (ThiP) and a solute-binding protein (ThiB).

The protein localises to the cell inner membrane. It catalyses the reaction thiamine(out) + ATP + H2O = thiamine(in) + ADP + phosphate + H(+). Its function is as follows. Part of the ABC transporter complex ThiBPQ involved in thiamine import. Responsible for energy coupling to the transport system. In Shigella boydii serotype 4 (strain Sb227), this protein is Thiamine import ATP-binding protein ThiQ.